Here is a 489-residue protein sequence, read N- to C-terminus: uncharacterized protein (489 aa).

A run of 11 helical transmembrane segments spans residues Phe-29–Gly-49, Leu-67–Gly-87, Trp-90–Asp-110, Ile-119–Ile-139, Phe-152–Phe-172, Ala-186–Ile-206, Leu-276–Leu-296, Ile-308–Trp-328, Gly-351–Val-371, Ala-397–Gly-417, and Ile-418–Phe-438.

The protein localises to the membrane. This is an uncharacterized protein from Schizosaccharomyces pombe (strain 972 / ATCC 24843) (Fission yeast).